Here is a 233-residue protein sequence, read N- to C-terminus: 2-C-methyl-D-erythritol 4-phosphate cytidylyltransferase (233 aa).

Belongs to the IspD/TarI cytidylyltransferase family. IspD subfamily.

It carries out the reaction 2-C-methyl-D-erythritol 4-phosphate + CTP + H(+) = 4-CDP-2-C-methyl-D-erythritol + diphosphate. Its pathway is isoprenoid biosynthesis; isopentenyl diphosphate biosynthesis via DXP pathway; isopentenyl diphosphate from 1-deoxy-D-xylulose 5-phosphate: step 2/6. In terms of biological role, catalyzes the formation of 4-diphosphocytidyl-2-C-methyl-D-erythritol from CTP and 2-C-methyl-D-erythritol 4-phosphate (MEP). The polypeptide is 2-C-methyl-D-erythritol 4-phosphate cytidylyltransferase (Lachnoclostridium phytofermentans (strain ATCC 700394 / DSM 18823 / ISDg) (Clostridium phytofermentans)).